The primary structure comprises 234 residues: Sugar fermentation stimulation protein A (234 aa).

Residues 201–220 constitute a DNA-binding region (H-T-H motif); that stretch reads LLSEAQQRGVEILAYKAELS.

Belongs to the SfsA family.

Functionally, binds to DNA non-specifically. Could be a regulatory factor involved in maltose metabolism. This chain is Sugar fermentation stimulation protein A, found in Escherichia coli (strain SMS-3-5 / SECEC).